The chain runs to 83 residues: Mu-theraphotoxin-Hhn2j 4 (83 aa).

The N-terminal stretch at 1 to 21 (MKASMFLALAGLVLLFVVGYA) is a signal peptide. A propeptide spanning residues 22 to 48 (SESEEKEFPIELLSKIFAVDVFKGEGR) is cleaved from the precursor. 3 disulfides stabilise this stretch: cysteine 50–cysteine 65, cysteine 57–cysteine 70, and cysteine 64–cysteine 77. Leucine 81 is modified (leucine amide).

It belongs to the neurotoxin 10 (Hwtx-1) family. 15 (Hntx-3) subfamily. In terms of assembly, monomer. Expressed by the venom gland.

The protein resides in the secreted. Its function is as follows. Lethal neurotoxin. Selectively blocks tetrodotoxin-sensitive voltage-gated sodium channels (Nav). Does not affect tetrodotoxin-resistant voltage-gated sodium channels or calcium channels. This chain is Mu-theraphotoxin-Hhn2j 4, found in Cyriopagopus hainanus (Chinese bird spider).